The following is a 269-amino-acid chain: Gap junction gamma-3 protein (269 aa).

The Extracellular portion of the chain corresponds to 1 to 33 (MLLLELPIKCRMCGRFLRQLLAQESQHSTPVGR). Residues 34–54 (FLLPMLMGFRLLILVSSGPGV) traverse the membrane as a helical segment. Over 55-86 (FGNDENEFICHLGQPGCKTICYDVFRPLSPLR) the chain is Cytoplasmic. The helical transmembrane segment at 87–107 (FWAFQVILMAVPSAIYVAFTL) threads the bilayer. Topologically, residues 108–145 (YHVIGYWEVPGKENKEQETQISKGDHSKDVSGAKSLKL) are extracellular. A helical membrane pass occupies residues 146–166 (LWAYVAHLGVRLALEGAALGV). The Cytoplasmic portion of the chain corresponds to 167 to 205 (QYNLYGFKMSSTFICREDPCIGSTTCFQSHPSEKTIFLN). Residues 206 to 226 (IMFGISGACFLFIFLELALLG) form a helical membrane-spanning segment. The Extracellular portion of the chain corresponds to 227–269 (LGRFWRIYKHKLSFLKKLPTSESSVRSKDTTDELSVVEAKEPF). Serine 261 carries the phosphoserine modification.

It belongs to the connexin family. Gamma-type subfamily. In terms of assembly, a connexon is composed of a hexamer of connexins. As to expression, CNS specific. Expression is restricted to brain, spinal cord, and sciatic nerve.

It is found in the cell membrane. The protein localises to the cell junction. The protein resides in the gap junction. In terms of biological role, one gap junction consists of a cluster of closely packed pairs of transmembrane channels, the connexons, through which materials of low MW diffuse from one cell to a neighboring cell. In Mus musculus (Mouse), this protein is Gap junction gamma-3 protein (Gjc3).